The following is a 237-amino-acid chain: Putative exosome complex component rrp40 (237 aa).

The S1 motif domain occupies 67 to 137 (EDMVIGTIIE…EPEVVCLSQK (71 aa)).

This sequence belongs to the RRP40 family. Component of the RNA exosome complex.

It is found in the cytoplasm. It localises to the nucleus. Its subcellular location is the nucleolus. Its function is as follows. Non-catalytic component of the RNA exosome complex which has 3'-&gt;5' exoribonuclease activity and participates in a multitude of cellular RNA processing and degradation events. This Dictyostelium discoideum (Social amoeba) protein is Putative exosome complex component rrp40 (exosc3).